A 290-amino-acid chain; its full sequence is 4-diphosphocytidyl-2-C-methyl-D-erythritol kinase (290 aa).

K10 is a catalytic residue. P96 to S106 contributes to the ATP binding site. D138 is an active-site residue.

The protein belongs to the GHMP kinase family. IspE subfamily.

It carries out the reaction 4-CDP-2-C-methyl-D-erythritol + ATP = 4-CDP-2-C-methyl-D-erythritol 2-phosphate + ADP + H(+). It functions in the pathway isoprenoid biosynthesis; isopentenyl diphosphate biosynthesis via DXP pathway; isopentenyl diphosphate from 1-deoxy-D-xylulose 5-phosphate: step 3/6. Functionally, catalyzes the phosphorylation of the position 2 hydroxy group of 4-diphosphocytidyl-2C-methyl-D-erythritol. This chain is 4-diphosphocytidyl-2-C-methyl-D-erythritol kinase, found in Caulobacter vibrioides (strain NA1000 / CB15N) (Caulobacter crescentus).